The sequence spans 183 residues: Large ribosomal subunit protein uL6 (183 aa).

It belongs to the universal ribosomal protein uL6 family. In terms of assembly, part of the 50S ribosomal subunit.

Its function is as follows. This protein binds to the 23S rRNA, and is important in its secondary structure. It is located near the subunit interface in the base of the L7/L12 stalk, and near the tRNA binding site of the peptidyltransferase center. This is Large ribosomal subunit protein uL6 from Moorella thermoacetica (strain ATCC 39073 / JCM 9320).